We begin with the raw amino-acid sequence, 128 residues long: Aspartate 1-decarboxylase (128 aa).

Residue S25 is the Schiff-base intermediate with substrate; via pyruvic acid of the active site. S25 is subject to Pyruvic acid (Ser). T57 contacts substrate. Residue Y58 is the Proton donor of the active site. Position 73-75 (73-75 (GSA)) interacts with substrate.

The protein belongs to the PanD family. As to quaternary structure, heterooctamer of four alpha and four beta subunits. Requires pyruvate as cofactor. In terms of processing, is synthesized initially as an inactive proenzyme, which is activated by self-cleavage at a specific serine bond to produce a beta-subunit with a hydroxyl group at its C-terminus and an alpha-subunit with a pyruvoyl group at its N-terminus.

The protein resides in the cytoplasm. It catalyses the reaction L-aspartate + H(+) = beta-alanine + CO2. Its pathway is cofactor biosynthesis; (R)-pantothenate biosynthesis; beta-alanine from L-aspartate: step 1/1. Functionally, catalyzes the pyruvoyl-dependent decarboxylation of aspartate to produce beta-alanine. This Burkholderia cenocepacia (strain ATCC BAA-245 / DSM 16553 / LMG 16656 / NCTC 13227 / J2315 / CF5610) (Burkholderia cepacia (strain J2315)) protein is Aspartate 1-decarboxylase.